Consider the following 419-residue polypeptide: Variant surface glycoprotein YnAT 1.1 (419 aa).

Residues 1 to 28 (MKRVLSNVLKAWIFTIVAFHNFSTSVTA) form the signal peptide. 2 N-linked (GlcNAc...) asparagine glycosylation sites follow: Asn-82 and Asn-358. A disordered region spans residues 369–405 (ESSRPPSTDANTSQKGPLQRPEKSGESSHLPSGSSHG). Residues 372–384 (RPPSTDANTSQKG) are compositionally biased toward polar residues. N-linked (GlcNAc...) (high mannose) asparagine glycosylation is present at Asn-379. Residues 395–405 (SSHLPSGSSHG) are compositionally biased toward low complexity. Residue Ser-400 is the site of GPI-anchor amidated serine attachment. The propeptide at 401–419 (GSSHGTKAIRSILHVALLM) is removed in mature form.

Its subcellular location is the cell membrane. VSG forms a coat on the surface of the parasite. The trypanosome evades the immune response of the host by expressing a series of antigenically distinct VSGs from an estimated 1000 VSG genes. The sequence is that of Variant surface glycoprotein YnAT 1.1 from Trypanosoma congolense.